The chain runs to 40 residues: VRNHVTCRINRGFCVPIRCPGRTRQIGTCFGPRIKCCRSW.

3 disulfides stabilise this stretch: cysteine 7/cysteine 36, cysteine 14/cysteine 29, and cysteine 19/cysteine 37.

It belongs to the beta-defensin family. In terms of tissue distribution, neutrophilic granules.

Its subcellular location is the secreted. Its function is as follows. Has bactericidal activity. Active against E.coli ML35 and S.aureus 502A. The polypeptide is Beta-defensin 2 (DEFB2) (Bos taurus (Bovine)).